We begin with the raw amino-acid sequence, 294 residues long: NAD kinase (294 aa).

Aspartate 73 functions as the Proton acceptor in the catalytic mechanism. Residues 73–74, 147–148, histidine 158, arginine 175, aspartate 177, 188–193, and glutamine 249 contribute to the NAD(+) site; these read DG, NE, and TAYSLS.

The protein belongs to the NAD kinase family. A divalent metal cation serves as cofactor.

The protein localises to the cytoplasm. The enzyme catalyses NAD(+) + ATP = ADP + NADP(+) + H(+). Involved in the regulation of the intracellular balance of NAD and NADP, and is a key enzyme in the biosynthesis of NADP. Catalyzes specifically the phosphorylation on 2'-hydroxyl of the adenosine moiety of NAD to yield NADP. This Aeromonas salmonicida (strain A449) protein is NAD kinase.